Here is a 981-residue protein sequence, read N- to C-terminus: Calsyntenin-1 (981 aa).

The signal sequence occupies residues 1 to 28 (MLRRPAPALAPAARLLLAGLLCGGGVWA). At 29 to 859 (ARVNKHKPWL…PHPFAVVPST (831 aa)) the chain is on the extracellular side. Cadherin domains lie at 38–164 (LEPT…APVF) and 165–265 (KEKS…TPGW). N-linked (GlcNAc...) asparagine glycans are attached at residues N346, N366, and N515. A helical membrane pass occupies residues 860–880 (ATVVIVVCVSFLVFMIILGVF). At 881-981 (RIRAAHRRTM…LEWDDSTLSY (101 aa)) the chain is on the cytoplasmic side. Positions 915–981 (METYEDQHSS…LEWDDSTLSY (67 aa)) are disordered. Acidic residues predominate over residues 925–960 (EEEEEEEEEEESEDGEEEDDITSAESESSEEEEGEQ). Over residues 962–981 (DPQNATRQQQLEWDDSTLSY) the composition is skewed to polar residues.

It belongs to the calsyntenin family. Directly interacts with APBA2. Forms a tripartite complex with APBA2 and APP. Interacts with KLC1. In terms of assembly, interacts with APBB1; this interaction stabilizes AlcICD metabolism. As to quaternary structure, interacts with PSEN1. In terms of processing, proteolytically processed under normal cellular conditions. A primary zeta-cleavage generates a large extracellular (soluble) N-terminal domain (sAlc) and a short C-terminal transmembrane fragment (CTF1). A secondary cleavage catalyzed by presenilin gamma-secretase within the transmembrane domain releases the beta-Alc-alpha chain in the extracellular milieu and produces an intracellular fragment (AlcICD). This processing is strongly suppressed in the tripartite complex formed with APBA2 and APP, which seems to prevent the association with PSEN1. Expressed in the brain and, a lower level, in the heart, skeletal muscle, kidney and placenta. Accumulates in dystrophic neurites around the amyloid core of Alzheimer disease senile plaques (at protein level).

The protein resides in the postsynaptic cell membrane. The protein localises to the endoplasmic reticulum membrane. It is found in the golgi apparatus membrane. Its subcellular location is the cell projection. It localises to the neuron projection. The protein resides in the nucleus. In terms of biological role, postsynaptic adhesion molecule that binds to presynaptic neurexins to mediate both excitatory and inhibitory synapse formation. Promotes synapse development by acting as a cell adhesion molecule at the postsynaptic membrane, which associates with neurexin-alpha at the presynaptic membrane. Also functions as a cargo in axonal anterograde transport by acting as a molecular adapter that promotes KLC1 association with vesicles. Complex formation with APBA2 and APP, stabilizes APP metabolism and enhances APBA2-mediated suppression of beta-APP40 secretion, due to the retardation of intracellular APP maturation. As intracellular fragment AlcICD, suppresses APBB1-dependent transactivation stimulated by APP C-terminal intracellular fragment (AICD), most probably by competing with AICD for APBB1-binding. Its function is as follows. In complex with APBA2 and C99, a C-terminal APP fragment, abolishes C99 interaction with PSEN1 and thus APP C99 cleavage by gamma-secretase, most probably through stabilization of the direct interaction between APBA2 and APP. This is Calsyntenin-1 from Homo sapiens (Human).